The sequence spans 156 residues: Ribosomal RNA large subunit methyltransferase H (156 aa).

Residues Leu-72, Gly-104, and Phe-123–Trp-128 contribute to the S-adenosyl-L-methionine site.

This sequence belongs to the RNA methyltransferase RlmH family. Homodimer.

The protein resides in the cytoplasm. The enzyme catalyses pseudouridine(1915) in 23S rRNA + S-adenosyl-L-methionine = N(3)-methylpseudouridine(1915) in 23S rRNA + S-adenosyl-L-homocysteine + H(+). Functionally, specifically methylates the pseudouridine at position 1915 (m3Psi1915) in 23S rRNA. The protein is Ribosomal RNA large subunit methyltransferase H of Ruegeria pomeroyi (strain ATCC 700808 / DSM 15171 / DSS-3) (Silicibacter pomeroyi).